Here is a 364-residue protein sequence, read N- to C-terminus: MITTQKKKKNRFLPDFDKQSIYSLRYEEMQDWLVEHGQQKFRAKQIFQWLYEKRVDSIDEMTNLSKDLREVLKDNFTMTTLETVVKQESRDGTIKFLFELQDGYTIETVLMRHEYGNSVCVTTQVGCRIGCTFCASTLGGLKRNLEAGEIVSQVLTVQKVLDATDERVSQIVIMGIGEPFENYDEMMDFLKIVNYDNGLNIGARHITVSTSGIIPRIYDFAEEDIQINFAVSLHAANDEIRSKLMPINRAYSIDKLMEAIQYYQEKTNRRITFEYGLFGGVNDQLTHARELAHLIQNLNCHVNLIPVNHVPERNYVKTPKEDIFKFEKELKRLGINATIRREQGSDIDAACGQLRAKERQVETR.

E107 (proton acceptor) is an active-site residue. The 234-residue stretch at 113–346 (HEYGNSVCVT…ATIRREQGSD (234 aa)) folds into the Radical SAM core domain. Cysteines 120 and 351 form a disulfide. [4Fe-4S] cluster-binding residues include C127, C131, and C134. S-adenosyl-L-methionine contacts are provided by residues 177 to 178 (GE), S209, 232 to 234 (SLH), and N308. Residue C351 is the S-methylcysteine intermediate of the active site.

This sequence belongs to the radical SAM superfamily. RlmN family. It depends on [4Fe-4S] cluster as a cofactor.

The protein localises to the cytoplasm. The enzyme catalyses adenosine(2503) in 23S rRNA + 2 reduced [2Fe-2S]-[ferredoxin] + 2 S-adenosyl-L-methionine = 2-methyladenosine(2503) in 23S rRNA + 5'-deoxyadenosine + L-methionine + 2 oxidized [2Fe-2S]-[ferredoxin] + S-adenosyl-L-homocysteine. The catalysed reaction is adenosine(37) in tRNA + 2 reduced [2Fe-2S]-[ferredoxin] + 2 S-adenosyl-L-methionine = 2-methyladenosine(37) in tRNA + 5'-deoxyadenosine + L-methionine + 2 oxidized [2Fe-2S]-[ferredoxin] + S-adenosyl-L-homocysteine. Functionally, specifically methylates position 2 of adenine 2503 in 23S rRNA and position 2 of adenine 37 in tRNAs. Confers resistance to some classes of antibiotics. The sequence is that of Probable dual-specificity RNA methyltransferase RlmN from Staphylococcus carnosus (strain TM300).